A 1885-amino-acid chain; its full sequence is Chitin synthase 5 (1885 aa).

The 789-residue stretch at 1–789 (MATRGNVPAH…SIALTGSQAA (789 aa)) folds into the Myosin motor domain. An ATP-binding site is contributed by 99–106 (GESGSGKT). 2 N-linked (GlcNAc...) asparagine glycosylation sites follow: N219 and N429. The interval 601–649 (KPLRMPSVSRKKHDQLRRMASRRADRSPAPQEEEPLPGTEEAKVRRTKP) is disordered. Residues 609 to 621 (SRKKHDQLRRMAS) show a composition bias toward basic residues. The segment at 666-690 (LDNITKSLTAPNVNNYFVFCLKPND) is actin-binding. Residue N668 is glycosylated (N-linked (GlcNAc...) asparagine). Positions 794 to 817 (GDIGSPSRPDTPGHNPFSDSKARL) are disordered. 2 helical membrane-spanning segments follow: residues 894 to 914 (WLAI…KWIG) and 929 to 949 (FAIN…IIVF). Residues 957–1016 (QNVYSAAELSAHDGKGKHSAYVAIRGQVFDLGAFMPNHYPKIIPQSSLKKYAGVDATGLF) enclose the Cytochrome b5 heme-binding domain. 2 N-linked (GlcNAc...) asparagine glycosylation sites follow: N1043 and N1068. The chain crosses the membrane as a helical span at residues 1205–1225 (ILLAVSILLCSVIGFKFFAAL). Residues N1462 and N1568 are each glycosylated (N-linked (GlcNAc...) asparagine). 3 helical membrane passes run 1599–1619 (LLST…IVLL), 1626–1646 (VPLT…IIFI), and 1653–1673 (MIGW…GLPL). 2 N-linked (GlcNAc...) asparagine glycosylation sites follow: N1759 and N1790. The region spanning 1827–1882 (LPTDDMLLNEIRDILRTADLMTVTKKGIKQELERRFNVNLDMKRAYIGSATEAILS) is the DEK-C domain.

It in the N-terminal section; belongs to the TRAFAC class myosin-kinesin ATPase superfamily. Myosin family. This sequence in the C-terminal section; belongs to the chitin synthase family. Class V subfamily. Post-translationally, maximal activity requires trypsin activation, suggesting a zymogenic nature.

The protein localises to the cell membrane. Its subcellular location is the membrane. The enzyme catalyses [(1-&gt;4)-N-acetyl-beta-D-glucosaminyl](n) + UDP-N-acetyl-alpha-D-glucosamine = [(1-&gt;4)-N-acetyl-beta-D-glucosaminyl](n+1) + UDP + H(+). In terms of biological role, polymerizes chitin, a structural polymer of the cell wall and septum, by transferring the sugar moiety of UDP-GlcNAc to the non-reducing end of the growing chitin polymer. CHS5 is required for the sustained growth at 37 degrees Celsius and is of critical importance for virulence. Especially important at infection temperatures for maintaining the cell wall integrity of developing yeast buds, elongating tips of hyphae, and random sites of expansion in sclerotic forms. The protein is Chitin synthase 5 of Exophiala dermatitidis (Black yeast-like fungus).